The chain runs to 98 residues: Cysteine-rich and transmembrane domain-containing protein WIH2 (98 aa).

Positions 1 to 77 (MSQYNQPPVG…PPQHQQQQSS (77 aa)) are disordered. The segment covering 9–21 (VGVPPPQGYPPEG) has biased composition (pro residues). The segment covering 37 to 55 (YPQQGYPPQGYPQQGYPQQ) has biased composition (low complexity). The segment covering 56–70 (GYPPPYAPQYPPPPQ) has biased composition (pro residues). The chain crosses the membrane as a helical span at residues 75-92 (QSSPGFLEGCLAALCCCC).

This sequence belongs to the CYSTM1 family. Expressed in floral organ primordia.

The protein localises to the membrane. In terms of biological role, required for the promotion of megasporogenesis, or promotion of germ cell formation from somatic precursor cells. Acts redundantly with WIH1. Functions in a genetic pathway downstream of SPL/NZZ and WUS and together with TRN2 in promoting megasporogenesis. The chain is Cysteine-rich and transmembrane domain-containing protein WIH2 from Arabidopsis thaliana (Mouse-ear cress).